We begin with the raw amino-acid sequence, 325 residues long: Dehydrogenase/reductase SDR family member 7B (325 aa).

Residues 1–17 lie on the Cytoplasmic side of the membrane; that stretch reads MVSAATRKSLLRARVMD. The helical; Signal-anchor for type II membrane protein transmembrane segment at 18-38 threads the bilayer; sequence FITSTAILPLLLGCVGLFSLF. Residues 39–325 lie on the Lumenal side of the membrane; sequence KLLQWLRMRA…ARKERKSKHS (287 aa). Positions 62 and 64 each coordinate NAD(+). A substrate-binding site is contributed by serine 194. 3 residues coordinate NAD(+): tyrosine 207, lysine 211, and threonine 242. Tyrosine 207 (proton acceptor) is an active-site residue.

The protein belongs to the short-chain dehydrogenases/reductases (SDR) family.

It localises to the endoplasmic reticulum membrane. In terms of biological role, putative oxidoreductase. The protein is Dehydrogenase/reductase SDR family member 7B (DHRS7B) of Bos taurus (Bovine).